We begin with the raw amino-acid sequence, 923 residues long: Transportin-3 (923 aa).

Met-1 is modified (N-acetylmethionine). Ser-74 is subject to Phosphoserine. Phosphothreonine is present on Thr-896.

As to quaternary structure, interacts with (GTP-bound) Ran. Interacts with (phosphorylated) SFRS1 and SFRS2; leading to their nuclear import. Interacts with NUP62. Interacts with RBM4. Interacts with CPSF6, promoting its nuclear import. (Microbial infection) Interacts with the HIV-1 pre-integration complex (PIC), which is composed of viral genome, matrix protein, Vpr and integrase. Interacts with HIV-1 integrase protein; the interaction is direct. In terms of tissue distribution, expressed in skeletal muscle.

The protein resides in the nucleus envelope. The protein localises to the cytoplasm. In terms of biological role, importin, which transports target proteins into the nucleus. Specifically mediates the nuclear import of splicing factor serine/arginine (SR) proteins, such as RBM4, SFRS1 and SFRS2, by recognizing phosphorylated SR domains. Also mediates the nuclear import of serine/arginine (SR) protein CPSF6, independently of CPSF6 phosphorylation. The nuclear import process is regulated by the small GTPase Ran that partitions between cytoplasm and nucleus in the predominantly GDP- and GTP-bound form, respectively. Importin associates with target cargo proteins in the cytoplasm, and the competitive binding of GTP-bound Ran induces the release of cargos in the nucleus. Functionally, (Microbial infection) Involved in immunodeficiency virus (HIV-1) infection by importing the pre-integration complex (PIC) into the nucleus. Required for a nuclear maturation step of HIV-1 prior to integration. The chain is Transportin-3 from Homo sapiens (Human).